The primary structure comprises 512 residues: Histidine ammonia-lyase (512 aa).

Positions 143–145 form a cross-link, 5-imidazolinone (Ala-Gly); that stretch reads ASG. The residue at position 144 (Ser144) is a 2,3-didehydroalanine (Ser).

This sequence belongs to the PAL/histidase family. Post-translationally, contains an active site 4-methylidene-imidazol-5-one (MIO), which is formed autocatalytically by cyclization and dehydration of residues Ala-Ser-Gly.

Its subcellular location is the cytoplasm. The catalysed reaction is L-histidine = trans-urocanate + NH4(+). It functions in the pathway amino-acid degradation; L-histidine degradation into L-glutamate; N-formimidoyl-L-glutamate from L-histidine: step 1/3. In Ruegeria pomeroyi (strain ATCC 700808 / DSM 15171 / DSS-3) (Silicibacter pomeroyi), this protein is Histidine ammonia-lyase.